A 462-amino-acid chain; its full sequence is Histidine--tRNA ligase (462 aa).

This sequence belongs to the class-II aminoacyl-tRNA synthetase family. In terms of assembly, homodimer.

The protein localises to the cytoplasm. It catalyses the reaction tRNA(His) + L-histidine + ATP = L-histidyl-tRNA(His) + AMP + diphosphate + H(+). The protein is Histidine--tRNA ligase of Trichormus variabilis (strain ATCC 29413 / PCC 7937) (Anabaena variabilis).